The following is a 787-amino-acid chain: Ribonucleoside-diphosphate reductase large subunit (787 aa).

Substrate-binding positions include threonine 209, 224–225 (SC), glycine 255, 436–440 (NLCTE), and 618–622 (PTVSS). Residues cysteine 225 and cysteine 453 are joined by a disulfide bond. The active-site Proton acceptor is the asparagine 436. Cysteine 438 (cysteine radical intermediate) is an active-site residue. The active-site Proton acceptor is the glutamate 440.

The protein belongs to the ribonucleoside diphosphate reductase large chain family. In terms of assembly, heterotetramer composed of a homodimer of the large subunit (R1) and a homodimer of the small subunit (R2). Larger multisubunit protein complex are also active, composed of (R1)n(R2)n.

The catalysed reaction is a 2'-deoxyribonucleoside 5'-diphosphate + [thioredoxin]-disulfide + H2O = a ribonucleoside 5'-diphosphate + [thioredoxin]-dithiol. In terms of biological role, ribonucleoside-diphosphate reductase holoenzyme provides the precursors necessary for viral DNA synthesis. Allows virus growth in non-dividing cells, as well as reactivation from latency in infected hosts. Catalyzes the biosynthesis of deoxyribonucleotides from the corresponding ribonucleotides. The polypeptide is Ribonucleoside-diphosphate reductase large subunit (Bos taurus (Bovine)).